Reading from the N-terminus, the 259-residue chain is UPF0246 protein PST_1170 (259 aa).

The protein belongs to the UPF0246 family.

In Stutzerimonas stutzeri (strain A1501) (Pseudomonas stutzeri), this protein is UPF0246 protein PST_1170.